Here is a 364-residue protein sequence, read N- to C-terminus: Protein-glutamate methylesterase/protein-glutamine glutaminase 3 (364 aa).

Positions 7–124 constitute a Response regulatory domain; sequence RVLIVDDSAS…THALLEASAR (118 aa). At Asp-58 the chain carries 4-aspartylphosphate. One can recognise a CheB-type methylesterase domain in the interval 167–358; the sequence is PTTERLVCIG…REIMLWQDAK (192 aa). Residues Ser-178, His-204, and Asp-300 contribute to the active site.

The protein belongs to the CheB family. In terms of processing, phosphorylated by CheA. Phosphorylation of the N-terminal regulatory domain activates the methylesterase activity.

The protein resides in the cytoplasm. The catalysed reaction is [protein]-L-glutamate 5-O-methyl ester + H2O = L-glutamyl-[protein] + methanol + H(+). It catalyses the reaction L-glutaminyl-[protein] + H2O = L-glutamyl-[protein] + NH4(+). In terms of biological role, involved in chemotaxis. Part of a chemotaxis signal transduction system that modulates chemotaxis in response to various stimuli. Catalyzes the demethylation of specific methylglutamate residues introduced into the chemoreceptors (methyl-accepting chemotaxis proteins or MCP) by CheR. Also mediates the irreversible deamidation of specific glutamine residues to glutamic acid. The chain is Protein-glutamate methylesterase/protein-glutamine glutaminase 3 from Rhodopseudomonas palustris (strain BisB18).